We begin with the raw amino-acid sequence, 477 residues long: ATP synthase subunit beta (477 aa).

163 to 170 contacts ATP; the sequence is GGAGVGKT.

Belongs to the ATPase alpha/beta chains family. In terms of assembly, F-type ATPases have 2 components, CF(1) - the catalytic core - and CF(0) - the membrane proton channel. CF(1) has five subunits: alpha(3), beta(3), gamma(1), delta(1), epsilon(1). CF(0) has four main subunits: a(1), b(1), b'(1) and c(9-12).

It localises to the cellular thylakoid membrane. The catalysed reaction is ATP + H2O + 4 H(+)(in) = ADP + phosphate + 5 H(+)(out). In terms of biological role, produces ATP from ADP in the presence of a proton gradient across the membrane. The catalytic sites are hosted primarily by the beta subunits. This is ATP synthase subunit beta from Synechococcus sp. (strain JA-3-3Ab) (Cyanobacteria bacterium Yellowstone A-Prime).